The sequence spans 350 residues: Small ribosomal subunit biogenesis GTPase RsgA (350 aa).

A compositionally biased stretch (polar residues) spans 1–17; the sequence is MSKNKLSKGQQRRVNAN. Residues 1 to 24 are disordered; it reads MSKNKLSKGQQRRVNANHQRRLKT. Residues 104 to 273 form the CP-type G domain; the sequence is TSVLTRPDFY…VIDSPGVREF (170 aa). GTP-binding positions include 160–163 and 214–222; these read NKID and GQSGVGKSS. C297, C302, H304, and C310 together coordinate Zn(2+).

This sequence belongs to the TRAFAC class YlqF/YawG GTPase family. RsgA subfamily. As to quaternary structure, monomer. Associates with 30S ribosomal subunit, binds 16S rRNA. Zn(2+) serves as cofactor.

It is found in the cytoplasm. Its function is as follows. One of several proteins that assist in the late maturation steps of the functional core of the 30S ribosomal subunit. Helps release RbfA from mature subunits. May play a role in the assembly of ribosomal proteins into the subunit. Circularly permuted GTPase that catalyzes slow GTP hydrolysis, GTPase activity is stimulated by the 30S ribosomal subunit. The polypeptide is Small ribosomal subunit biogenesis GTPase RsgA (Salmonella schwarzengrund (strain CVM19633)).